The primary structure comprises 194 residues: Small ribosomal subunit protein uS7 (194 aa).

It belongs to the universal ribosomal protein uS7 family. Part of the 30S ribosomal subunit.

Its function is as follows. One of the primary rRNA binding proteins, it binds directly to 16S rRNA where it nucleates assembly of the head domain of the 30S subunit. Is located at the subunit interface close to the decoding center. This is Small ribosomal subunit protein uS7 from Sulfurisphaera tokodaii (strain DSM 16993 / JCM 10545 / NBRC 100140 / 7) (Sulfolobus tokodaii).